The primary structure comprises 529 residues: 2-(3-amino-3-carboxypropyl)histidine synthase subunit 2-2 (529 aa).

The [4Fe-4S] cluster site is built by C130, C151, and C366.

This sequence belongs to the DPH1/DPH2 family. DPH2 subfamily. As to quaternary structure, component of the 2-(3-amino-3-carboxypropyl)histidine synthase complex composed of DPH1, DPH2, DPH3 and a NADH-dependent reductase, predominantly CBR1. [4Fe-4S] cluster serves as cofactor.

It is found in the cytoplasm. Its pathway is protein modification; peptidyl-diphthamide biosynthesis. Functionally, required for the first step of diphthamide biosynthesis, a post-translational modification of histidine which occurs in elongation factor 2. DPH1 and DPH2 transfer a 3-amino-3-carboxypropyl (ACP) group from S-adenosyl-L-methionine (SAM) to a histidine residue, the reaction is assisted by a reduction system comprising DPH3 and a NADH-dependent reductase, predominantly CBR1. Facilitates the reduction of the catalytic iron-sulfur cluster found in the DPH1 subunit. This chain is 2-(3-amino-3-carboxypropyl)histidine synthase subunit 2-2, found in Candida albicans (strain SC5314 / ATCC MYA-2876) (Yeast).